Consider the following 144-residue polypeptide: Large ribosomal subunit protein uL16 (144 aa).

The segment covering Met1–Gly19 has biased composition (basic residues). The tract at residues Met1–Gly23 is disordered.

Belongs to the universal ribosomal protein uL16 family. Part of the 50S ribosomal subunit.

In terms of biological role, binds 23S rRNA and is also seen to make contacts with the A and possibly P site tRNAs. The polypeptide is Large ribosomal subunit protein uL16 (Staphylococcus carnosus (strain TM300)).